Reading from the N-terminus, the 137-residue chain is Small ribosomal subunit protein eS6 (137 aa).

Over residues Leu114–Ser127 the composition is skewed to acidic residues. Residues Leu114–Glu137 form a disordered region. A compositionally biased stretch (basic and acidic residues) spans Ala128–Glu137.

The protein belongs to the eukaryotic ribosomal protein eS6 family.

In Nitrosopumilus maritimus (strain SCM1), this protein is Small ribosomal subunit protein eS6.